The primary structure comprises 91 residues: Small ribosomal subunit protein bS16 (91 aa).

This sequence belongs to the bacterial ribosomal protein bS16 family.

This Enterococcus faecalis (strain ATCC 700802 / V583) protein is Small ribosomal subunit protein bS16.